Reading from the N-terminus, the 165-residue chain is Glycine cleavage system H protein, mitochondrial (165 aa).

The transit peptide at 1 to 31 (MALRIWASSTAKALRLSSASRPHFSPLFRCF) directs the protein to the mitochondrion. In terms of domain architecture, Lipoyl-binding spans 55 to 137 (VATIGITDHA…YEDGWMIKVK (83 aa)). Lys96 bears the N6-lipoyllysine mark.

The protein belongs to the GcvH family. In terms of assembly, the glycine cleavage system is composed of four components that only loosely associate: the P protein (EC 1.4.4.2), the T protein (EC 2.1.2.10), the L protein (EC 1.8.1.4) and the lipoyl-bearing H protein. The cofactor is (R)-lipoate. As to expression, expressed in roots, stems and leaves.

The protein localises to the mitochondrion. Functionally, the glycine cleavage system catalyzes the degradation of glycine. The H protein shuttles the methylamine group of glycine from the P protein to the T protein. The protein is Glycine cleavage system H protein, mitochondrial (GDCSH) of Flaveria trinervia (Clustered yellowtops).